The chain runs to 100 residues: Urease subunit gamma (100 aa).

This sequence belongs to the urease gamma subunit family. Heterotrimer of UreA (gamma), UreB (beta) and UreC (alpha) subunits. Three heterotrimers associate to form the active enzyme.

It localises to the cytoplasm. It catalyses the reaction urea + 2 H2O + H(+) = hydrogencarbonate + 2 NH4(+). The protein operates within nitrogen metabolism; urea degradation; CO(2) and NH(3) from urea (urease route): step 1/1. The protein is Urease subunit gamma of Streptomyces avermitilis (strain ATCC 31267 / DSM 46492 / JCM 5070 / NBRC 14893 / NCIMB 12804 / NRRL 8165 / MA-4680).